We begin with the raw amino-acid sequence, 346 residues long: Galactitol 1-phosphate 5-dehydrogenase (346 aa).

Zn(2+) is bound by residues cysteine 38, histidine 59, cysteine 89, cysteine 92, cysteine 95, cysteine 103, and glutamate 144.

The protein belongs to the zinc-containing alcohol dehydrogenase family. It depends on Zn(2+) as a cofactor.

It catalyses the reaction galactitol 1-phosphate + NAD(+) = keto-D-tagatose 6-phosphate + NADH + H(+). Its function is as follows. Converts galactitol 1-phosphate to tagatose 6-phosphate. The polypeptide is Galactitol 1-phosphate 5-dehydrogenase (gatD) (Escherichia coli O157:H7).